Reading from the N-terminus, the 182-residue chain is Adenine phosphoribosyltransferase (182 aa).

Belongs to the purine/pyrimidine phosphoribosyltransferase family. In terms of assembly, homodimer.

It localises to the cytoplasm. It catalyses the reaction AMP + diphosphate = 5-phospho-alpha-D-ribose 1-diphosphate + adenine. The protein operates within purine metabolism; AMP biosynthesis via salvage pathway; AMP from adenine: step 1/1. Functionally, catalyzes a salvage reaction resulting in the formation of AMP, that is energically less costly than de novo synthesis. This Pseudomonas fluorescens (strain Pf0-1) protein is Adenine phosphoribosyltransferase.